The following is a 168-amino-acid chain: Putative postmeiotic segregation increased 2-like protein 3 (168 aa).

Positions 8 to 84 (VSFKDVAVDF…EGEFPCQHSP (77 aa)) constitute a KRAB domain.

Belongs to the DNA mismatch repair MutL/HexB family.

The protein is Putative postmeiotic segregation increased 2-like protein 3 (PMS2P3) of Homo sapiens (Human).